The following is a 6919-amino-acid chain: Nonribosomal peptide synthetase easA (6919 aa).

The region spanning 17–93 (TNNEVVEKDI…ELCQSVKLAE (77 aa)) is the Carrier 1 domain. At S54 the chain carries O-(pantetheine 4'-phosphoryl)serine. Residues 123–427 (EAQKLYASTK…FLRKVKDTRM (305 aa)) form an epimerization 1 region. Positions 294–319 (FRRSTPVESTNDERNTNERQHNRHQN) are disordered. Residues 304 to 319 (NDERNTNERQHNRHQN) show a composition bias toward basic and acidic residues. The interval 604 to 981 (LNVELDCGRL…ISTTQEINQL (378 aa)) is condensation 1. The interval 1003-1394 (QRLRRPDAWA…GRRDTQIKVR (392 aa)) is adenylation 1. The region spanning 1531–1608 (EPETLLERQV…QLAQTAEVKD (78 aa)) is the Carrier 2 domain. S1569 bears the O-(pantetheine 4'-phosphoryl)serine mark. Positions 1617–2031 (LLSPMQKWYF…ANAISALGTE (415 aa)) are epimerization 2. Residues 2072–2509 (VEDIYPCSPI…VGQLNTVTPK (438 aa)) are condensation 2. Positions 2541-2930 (RPNATAVCAW…ARKDSQVKVR (390 aa)) are adenylation 2. The 77-residue stretch at 3067–3143 (APSTFMEKKL…EMAAHLEAQM (77 aa)) folds into the Carrier 3 domain. O-(pantetheine 4'-phosphoryl)serine is present on S3104. The condensation 3 stretch occupies residues 3188-3599 (EDVYPCTPLQ…LLSKDEARRL (412 aa)). The interval 3620-4018 (QHVSTNPYAP…GRRDGQVKIR (399 aa)) is adenylation 3. In terms of domain architecture, Carrier 4 spans 4151 to 4228 (TPSTSEEKNI…QLAKKAVIKT (78 aa)). At S4188 the chain carries O-(pantetheine 4'-phosphoryl)serine. The condensation 4 stretch occupies residues 4282-4708 (ESIYYCSPIQ…EIDVIPTGDV (427 aa)). The tract at residues 4732–5133 (EQALSQPGAQ…GRADGQIKIR (402 aa)) is adenylation 4. The Carrier 5 domain maps to 5260–5337 (ALSTETERRL…DMANTIANSE (78 aa)). O-(pantetheine 4'-phosphoryl)serine is present on S5296. The condensation 5 stretch occupies residues 5380–5775 (EDAYPCTPLQ…VFGQLQSAAN (396 aa)). The interval 5824 to 6216 (SCPDAQAVHA…IGRRDTQVKI (393 aa)) is adenylation 5. A Carrier 6 domain is found at 6344–6421 (EPATVTERLL…DMATLIDRKT (78 aa)). S6381 is subject to O-(pantetheine 4'-phosphoryl)serine.

Its pathway is antibiotic biosynthesis. In terms of biological role, nonribosomal peptide synthetase; part of the gene cluster that mediates the biosynthesis of emericellamides, secondary metabolites acting as antibiotics. The biosynthesis of emericellamides initiates from the highly reducing polyketide synthase easB which catalyzes the formation of the linear polyketide chain. EasB produces several polyketides that can be further processed by the downstream enzymes. The polyketides are released from easB as linear polyketide carboxylic acids, which are converted to CoA thioesters by the acyl-CoA ligase easD. The substrates are then loaded onto the acyltransferase easC, which shuttles them to the first thiolation (T) domain of the nonribosomal peptide synthetase easA. EasA then performs condensation of the polyketides with one glycine, two alanine, one valine and one leucine residues. A last step of cyclization leads to the production of emericellamides. The sequence is that of Nonribosomal peptide synthetase easA from Emericella nidulans (strain FGSC A4 / ATCC 38163 / CBS 112.46 / NRRL 194 / M139) (Aspergillus nidulans).